Consider the following 1788-residue polypeptide: U3 small nucleolar RNA-associated protein 10 (1788 aa).

Residues 585-622 (LDFQAVVPYAIVALSDPAKKVRRAAAELVTVLGSFYET) form an HEAT 1 repeat. The disordered stretch occupies residues 884 to 905 (PATKRRRVGSSEKSVDSQSPAD). HEAT repeat units follow at residues 926–962 (AKHPELLPSLFTTLSELQHLRTVVGSELGYLQSLVLS), 1049–1086 (QTVKEVIPPLIETFRKSRRNLVASTAELLTSFVVAYEH), 1257–1294 (LSIAEFIKSVEALLDRPNVILRQKVLRALERRVDSESI), 1301–1339 (EALLAFLPQLTAVIRESDDMNYKHTAVNCVDKIAEKYGK), 1703–1740 (EHHKEINSALLKHLRSEQAAVRLAVIKCEQELTARLGE), and 1744–1781 (QSLPEMLPFISELQDDDDEVVERENRRWIVGIEETLGE).

This sequence belongs to the HEATR1/UTP10 family. As to quaternary structure, component of the ribosomal small subunit (SSU) processome.

It localises to the nucleus. The protein resides in the nucleolus. In terms of biological role, involved in nucleolar processing of pre-18S ribosomal RNA. Involved in ribosome biosynthesis. This Neurospora crassa (strain ATCC 24698 / 74-OR23-1A / CBS 708.71 / DSM 1257 / FGSC 987) protein is U3 small nucleolar RNA-associated protein 10 (rbg-5).